Reading from the N-terminus, the 271-residue chain is Formamidopyrimidine-DNA glycosylase (271 aa).

The Schiff-base intermediate with DNA role is filled by Pro2. Catalysis depends on Glu3, which acts as the Proton donor. Lys57 functions as the Proton donor; for beta-elimination activity in the catalytic mechanism. DNA contacts are provided by His90, Arg109, and Lys151. An FPG-type zinc finger spans residues 236–270; the sequence is HVYGRGGETCTQCGNLLSEIRLGQRTTVFCSICQP. Residue Arg260 is the Proton donor; for delta-elimination activity of the active site.

This sequence belongs to the FPG family. In terms of assembly, monomer. Zn(2+) serves as cofactor.

The catalysed reaction is Hydrolysis of DNA containing ring-opened 7-methylguanine residues, releasing 2,6-diamino-4-hydroxy-5-(N-methyl)formamidopyrimidine.. It catalyses the reaction 2'-deoxyribonucleotide-(2'-deoxyribose 5'-phosphate)-2'-deoxyribonucleotide-DNA = a 3'-end 2'-deoxyribonucleotide-(2,3-dehydro-2,3-deoxyribose 5'-phosphate)-DNA + a 5'-end 5'-phospho-2'-deoxyribonucleoside-DNA + H(+). In terms of biological role, involved in base excision repair of DNA damaged by oxidation or by mutagenic agents. Acts as a DNA glycosylase that recognizes and removes damaged bases. Has a preference for oxidized purines, such as 7,8-dihydro-8-oxoguanine (8-oxoG). Has AP (apurinic/apyrimidinic) lyase activity and introduces nicks in the DNA strand. Cleaves the DNA backbone by beta-delta elimination to generate a single-strand break at the site of the removed base with both 3'- and 5'-phosphates. This chain is Formamidopyrimidine-DNA glycosylase, found in Shewanella oneidensis (strain ATCC 700550 / JCM 31522 / CIP 106686 / LMG 19005 / NCIMB 14063 / MR-1).